We begin with the raw amino-acid sequence, 193 residues long: Protein THEM6 (193 aa).

The N-terminal stretch at 1–18 (MSWLVVLLILYVIWDVNY) is a signal peptide. Asn-149 is a glycosylation site (N-linked (GlcNAc...) asparagine).

Belongs to the THEM6 family.

Its subcellular location is the secreted. The protein is Protein THEM6 of Drosophila melanogaster (Fruit fly).